Reading from the N-terminus, the 344-residue chain is Probable dual-specificity RNA methyltransferase RlmN (344 aa).

The Proton acceptor role is filled by E90. A Radical SAM core domain is found at 96 to 326 (YKYGNAICIS…VTIRRELGSS (231 aa)). An intrachain disulfide couples C103 to C331. [4Fe-4S] cluster is bound by residues C110, C114, and C117. Residues 157–158 (GE), S189, 212–214 (SLH), and N288 each bind S-adenosyl-L-methionine. Residue C331 is the S-methylcysteine intermediate of the active site.

It belongs to the radical SAM superfamily. RlmN family. It depends on [4Fe-4S] cluster as a cofactor.

It is found in the cytoplasm. The enzyme catalyses adenosine(2503) in 23S rRNA + 2 reduced [2Fe-2S]-[ferredoxin] + 2 S-adenosyl-L-methionine = 2-methyladenosine(2503) in 23S rRNA + 5'-deoxyadenosine + L-methionine + 2 oxidized [2Fe-2S]-[ferredoxin] + S-adenosyl-L-homocysteine. It catalyses the reaction adenosine(37) in tRNA + 2 reduced [2Fe-2S]-[ferredoxin] + 2 S-adenosyl-L-methionine = 2-methyladenosine(37) in tRNA + 5'-deoxyadenosine + L-methionine + 2 oxidized [2Fe-2S]-[ferredoxin] + S-adenosyl-L-homocysteine. Functionally, specifically methylates position 2 of adenine 2503 in 23S rRNA and position 2 of adenine 37 in tRNAs. The sequence is that of Probable dual-specificity RNA methyltransferase RlmN from Caldicellulosiruptor saccharolyticus (strain ATCC 43494 / DSM 8903 / Tp8T 6331).